A 127-amino-acid polypeptide reads, in one-letter code: Aspartate 1-decarboxylase (127 aa).

Serine 25 functions as the Schiff-base intermediate with substrate; via pyruvic acid in the catalytic mechanism. Serine 25 is subject to Pyruvic acid (Ser). Threonine 57 lines the substrate pocket. Residue tyrosine 58 is the Proton donor of the active site. 73–75 provides a ligand contact to substrate; it reads GAA.

Belongs to the PanD family. Heterooctamer of four alpha and four beta subunits. Pyruvate is required as a cofactor. Is synthesized initially as an inactive proenzyme, which is activated by self-cleavage at a specific serine bond to produce a beta-subunit with a hydroxyl group at its C-terminus and an alpha-subunit with a pyruvoyl group at its N-terminus.

The protein resides in the cytoplasm. The enzyme catalyses L-aspartate + H(+) = beta-alanine + CO2. Its pathway is cofactor biosynthesis; (R)-pantothenate biosynthesis; beta-alanine from L-aspartate: step 1/1. Catalyzes the pyruvoyl-dependent decarboxylation of aspartate to produce beta-alanine. This Carboxydothermus hydrogenoformans (strain ATCC BAA-161 / DSM 6008 / Z-2901) protein is Aspartate 1-decarboxylase.